We begin with the raw amino-acid sequence, 414 residues long: MFSFYFDNKKISKLLMVGYGSTGKSVCDFLANFIDLSVDISQNDDDFINCDLEQYDLITVSPGIPLNKSPYRVLSKFKQKIVSDIDLFYQSIRNTKAKMIAVTGSNGKSTIVTMLDFVLRDMGYKSILVGNIGTPPLNKIGEKFDYCVVEVSSFQIDLFNSVEFDLGCVVNVSLDHLDRYKNYEEYKQSKLNLAKFSKDFFVYDVHNTGIKYAGEYQIVRGSIYKDTTKLLDITETNLFGEHNLENIIVVLNIFDRFGIDISKAVAAIKKFKGLKHRCEIVKNIAGVTYINDSKGTNVGATIAALNSITSSKNIILLLGGVAKGGDFSLMSKSLAKYVKYVYLYGQDKEYIENYIKDMCRYQICNDMKDAFRLASQKAQDSEIVLLSPACASFDEFSGYAERGEVFEKLVAELK.

104 to 110 (GSNGKST) contacts ATP.

This sequence belongs to the MurCDEF family.

It localises to the cytoplasm. It catalyses the reaction UDP-N-acetyl-alpha-D-muramoyl-L-alanine + D-glutamate + ATP = UDP-N-acetyl-alpha-D-muramoyl-L-alanyl-D-glutamate + ADP + phosphate + H(+). It participates in cell wall biogenesis; peptidoglycan biosynthesis. Functionally, cell wall formation. Catalyzes the addition of glutamate to the nucleotide precursor UDP-N-acetylmuramoyl-L-alanine (UMA). The protein is UDP-N-acetylmuramoylalanine--D-glutamate ligase of Francisella philomiragia subsp. philomiragia (strain ATCC 25017 / CCUG 19701 / FSC 153 / O#319-036).